The primary structure comprises 216 residues: DNA replication complex GINS protein psf1 (216 aa).

A disordered region spans residues 110-133; it reads QTTGGPKGVTEGNEGGGTTSSLSP. The span at 111 to 127 shows a compositional bias: gly residues; sequence TTGGPKGVTEGNEGGGT.

Belongs to the GINS1/PSF1 family. As to quaternary structure, component of the GINS complex which is a heterotetramer of div-26/sld5, drc-1/psf1, drc-2/psf2 and drc-3/psf3.

Its subcellular location is the nucleus. In terms of biological role, the GINS complex plays an essential role in the initiation of DNA replication. The sequence is that of DNA replication complex GINS protein psf1 (drc-1) from Neurospora crassa (strain ATCC 24698 / 74-OR23-1A / CBS 708.71 / DSM 1257 / FGSC 987).